Here is a 264-residue protein sequence, read N- to C-terminus: Movement protein (264 aa).

The tract at residues 211 to 264 (RTKSSKRGPKNNNNLGKGRSGGRPKPKSFDEVEKEFDNLIEDEAETSVADSDSY) is disordered. Over residues 237–247 (KSFDEVEKEFD) the composition is skewed to basic and acidic residues.

Belongs to the tobamovirus movement protein family. In terms of assembly, binds to host RBCS at the plasmodesmata; this interaction seems required for viral systemic movement. In resistant plants, interacts with host MBP2C at host microtubules; this interaction prevents virus cell to cell movement. In resistant plants, interacts with host resistance (R) protein (e.g. tomato ToMV resistance protein TM-2(2), AC Q71BG9) at the host plasma membrane; this interaction triggers host defense responses leading to programmed cell death.

Its subcellular location is the host cytoplasm. It is found in the host cytoskeleton. The protein resides in the host cell junction. The protein localises to the host plasmodesma. In terms of biological role, transports viral genome to neighboring plant cells directly through plasmosdesmata, without any budding. The movement protein allows efficient cell to cell propagation, by bypassing the host cell wall barrier. Forms a ribonucleoprotein complex with viral RNA. Binds microtubules and modulates microtubule stability. Can bind double-stranded DNA. Triggers host hypersensitive defense reaction in incompatible plants harboring resistance (R) proteins. The chain is Movement protein (MP) from Antirrhinum majus (Garden snapdragon).